We begin with the raw amino-acid sequence, 690 residues long: DNA ligase (690 aa).

NAD(+) is bound by residues 49 to 53 (DAEYD), 98 to 99 (SL), and Glu-129. Catalysis depends on Lys-131, which acts as the N6-AMP-lysine intermediate. The NAD(+) site is built by Arg-152, Glu-191, Lys-308, and Lys-332. 4 residues coordinate Zn(2+): Cys-426, Cys-429, Cys-444, and Cys-450. The BRCT domain maps to 607–690 (EDAARLEGLT…ALLREQGIDA (84 aa)).

It belongs to the NAD-dependent DNA ligase family. LigA subfamily. It depends on Mg(2+) as a cofactor. The cofactor is Mn(2+).

It carries out the reaction NAD(+) + (deoxyribonucleotide)n-3'-hydroxyl + 5'-phospho-(deoxyribonucleotide)m = (deoxyribonucleotide)n+m + AMP + beta-nicotinamide D-nucleotide.. DNA ligase that catalyzes the formation of phosphodiester linkages between 5'-phosphoryl and 3'-hydroxyl groups in double-stranded DNA using NAD as a coenzyme and as the energy source for the reaction. It is essential for DNA replication and repair of damaged DNA. The polypeptide is DNA ligase (Salinibacter ruber (strain DSM 13855 / M31)).